The following is a 1198-amino-acid chain: DNA polymerase (1198 aa).

Disordered stretches follow at residues 1-90, 179-198, and 906-931; these read MALV…TVVA, LEQP…QPNP, and ALAD…PSGT. Residues 30 to 40 show a composition bias toward low complexity; sequence QQPPRAAPAPA.

This sequence belongs to the DNA polymerase type-B family. In terms of assembly, heterodimer with the terminal protein; this heterodimer binds to bp 9 to 18 of the genome. Forms a complex with viral pTP, DBP and hosts NFIA and POU2F1/OCT1 for initiation of replication.

The protein localises to the host nucleus. It carries out the reaction DNA(n) + a 2'-deoxyribonucleoside 5'-triphosphate = DNA(n+1) + diphosphate. Eukaryotic-type DNA polymerase involved in viral genomic replication. DNA synthesis is protein primed, and acts in a strand displacement replication. Assembles in complex with viral pTP, DBP, host NFIA and host POU2F1/OCT1 on viral origin of replication. The polymerase covalently transfers dCMP onto pTP, thereby initiating complementary strand synthesis. This Homo sapiens (Human) protein is DNA polymerase.